Consider the following 67-residue polypeptide: Stomoxyn (67 aa).

Positions 1-24 (MNFYKYLVVLVVLVLCLSATQTEA) are cleaved as a signal peptide. Thr66 carries the post-translational modification Threonine amide.

In terms of tissue distribution, constitutively expressed in the adult anterior midgut; proventriculus, thoracic and reservoir regions.

It localises to the secreted. Its function is as follows. Has antimicrobial activity against most Gram-positive and Gram-negative bacteria, filamentous fungi and yeasts tested. Has trypanolytic effect on T.b.rhodesiense and limited hemolytic activity against bovine red blood cells. Functionally, may play an important role in protecting the stored blood in the anterior midgut from microorganisms prior to digestion. Adopts an amphipathic alpha-helical structure only in the presence of an organic solvent that mimics a phospholipid membrane. The sequence is that of Stomoxyn from Stomoxys calcitrans (Stable fly).